The chain runs to 397 residues: Ethanolaminephosphotransferase 1 (397 aa).

N-acetylalanine is present on Ala2. 10 helical membrane-spanning segments follow: residues 47–69 (WLAP…LLMA), 84–103 (HVPD…AYTL), 123–145 (LFDH…SIFG), 150–172 (GVSV…LSHW), 179–201 (ILFL…IVTA), 221–243 (LFTA…LNFF), 256–278 (VYEA…AWIL), 291–310 (VFYF…LIVC), 317–339 (CPTL…LGVA), and 344–366 (SILL…VRVV). Position 387 (Sec387) is a non-standard amino acid, selenocysteine.

Belongs to the CDP-alcohol phosphatidyltransferase class-I family. Mg(2+) is required as a cofactor. The cofactor is Mn(2+).

It is found in the endoplasmic reticulum membrane. The enzyme catalyses CDP-ethanolamine + a 1,2-diacyl-sn-glycerol = a 1,2-diacyl-sn-glycero-3-phosphoethanolamine + CMP + H(+). The catalysed reaction is 1-O-alkyl-2-acyl-sn-glycerol + CDP-ethanolamine = a 1-O-alkyl-2-acyl-sn-glycero-3-phosphoethanolamine + CMP + H(+). The protein operates within phospholipid metabolism; phosphatidylethanolamine biosynthesis; phosphatidylethanolamine from ethanolamine: step 3/3. Functionally, ethanolaminephosphotransferase that catalyzes the transfer of phosphoethanolamine (PE) from CDP-ethanolamine to lipid acceptors, the final step in the synthesis of PE via the 'Kennedy' pathway. PE is the second most abundant phospholipid of membranes in mammals and is involved in various membrane-related cellular processes. The enzyme is critical for the synthesis of several PE species and also catalyzes the synthesis of plasmanyl-PE, a lipid required for proper myelination and neurodevelopment, from 1-alkyl-2-acylglycerol. In Pongo abelii (Sumatran orangutan), this protein is Ethanolaminephosphotransferase 1.